A 123-amino-acid chain; its full sequence is Small ribosomal subunit protein uS12 (123 aa).

Asp89 carries the post-translational modification 3-methylthioaspartic acid.

Belongs to the universal ribosomal protein uS12 family. In terms of assembly, part of the 30S ribosomal subunit. Contacts proteins S8 and S17. May interact with IF1 in the 30S initiation complex.

Its function is as follows. With S4 and S5 plays an important role in translational accuracy. Functionally, interacts with and stabilizes bases of the 16S rRNA that are involved in tRNA selection in the A site and with the mRNA backbone. Located at the interface of the 30S and 50S subunits, it traverses the body of the 30S subunit contacting proteins on the other side and probably holding the rRNA structure together. The combined cluster of proteins S8, S12 and S17 appears to hold together the shoulder and platform of the 30S subunit. This is Small ribosomal subunit protein uS12 from Methylobacterium nodulans (strain LMG 21967 / CNCM I-2342 / ORS 2060).